Reading from the N-terminus, the 146-residue chain is Large ribosomal subunit protein uL15 (146 aa).

A disordered region spans residues 1-54 (MKLHELRPAAGSKSAPKRVGRGTGSGLGRNAGKGEKGQNARSGGGVRPGFEGGQ). 2 stretches are compositionally biased toward gly residues: residues 21–31 (RGTGSGLGRNA) and 42–52 (SGGGVRPGFEG).

Belongs to the universal ribosomal protein uL15 family. As to quaternary structure, part of the 50S ribosomal subunit.

Its function is as follows. Binds to the 23S rRNA. The sequence is that of Large ribosomal subunit protein uL15 from Clostridium perfringens (strain ATCC 13124 / DSM 756 / JCM 1290 / NCIMB 6125 / NCTC 8237 / Type A).